The primary structure comprises 181 residues: TATA-box-binding protein (181 aa).

A run of 2 repeats spans residues 7–83 (IVNV…IKEL) and 98–173 (VQNM…LTTL).

Belongs to the TBP family.

General factor that plays a role in the activation of archaeal genes transcribed by RNA polymerase. Binds specifically to the TATA box promoter element which lies close to the position of transcription initiation. The chain is TATA-box-binding protein from Methanococcus maripaludis (strain C7 / ATCC BAA-1331).